Reading from the N-terminus, the 271-residue chain is 3-methyl-2-oxobutanoate hydroxymethyltransferase (271 aa).

The Mg(2+) site is built by aspartate 53 and aspartate 92. 3-methyl-2-oxobutanoate-binding positions include 53–54 (DS), aspartate 92, and lysine 120. Glutamate 122 lines the Mg(2+) pocket. The Proton acceptor role is filled by glutamate 189.

It belongs to the PanB family. As to quaternary structure, homodecamer; pentamer of dimers. Mg(2+) is required as a cofactor.

The protein localises to the cytoplasm. It carries out the reaction 3-methyl-2-oxobutanoate + (6R)-5,10-methylene-5,6,7,8-tetrahydrofolate + H2O = 2-dehydropantoate + (6S)-5,6,7,8-tetrahydrofolate. It functions in the pathway cofactor biosynthesis; (R)-pantothenate biosynthesis; (R)-pantoate from 3-methyl-2-oxobutanoate: step 1/2. Functionally, catalyzes the reversible reaction in which hydroxymethyl group from 5,10-methylenetetrahydrofolate is transferred onto alpha-ketoisovalerate to form ketopantoate. In Burkholderia mallei (strain NCTC 10247), this protein is 3-methyl-2-oxobutanoate hydroxymethyltransferase.